The sequence spans 131 residues: Sulfurtransferase TusD (131 aa).

C81 serves as the catalytic Cysteine persulfide intermediate.

The protein belongs to the DsrE/TusD family. In terms of assembly, heterohexamer, formed by a dimer of trimers. The hexameric TusBCD complex contains 2 copies each of TusB, TusC and TusD. The TusBCD complex interacts with TusE.

Its subcellular location is the cytoplasm. Part of a sulfur-relay system required for 2-thiolation of 5-methylaminomethyl-2-thiouridine (mnm(5)s(2)U) at tRNA wobble positions. Accepts sulfur from TusA and transfers it in turn to TusE. The chain is Sulfurtransferase TusD from Yersinia pseudotuberculosis serotype O:1b (strain IP 31758).